Consider the following 217-residue polypeptide: Adenylate kinase (217 aa).

ATP is bound at residue 10 to 15 (GAGKGT). Residues 30-59 (STGDMFRAAIKAGTALGMKAKEYMDAGSLV) are NMP. AMP is bound by residues Thr31, Arg36, 57–59 (SLV), 85–88 (GFPR), and Gln92. Residues 126–163 (GRRICRQCGGTYHMVFNPPAAEAVCDKCGGELYQRSDD) form an LID region. Arg127 provides a ligand contact to ATP. Zn(2+) contacts are provided by Cys130 and Cys133. 136 to 137 (TY) lines the ATP pocket. Cys150 and Cys153 together coordinate Zn(2+). Residues Arg160 and Arg171 each coordinate AMP. ATP is bound at residue Gln199.

The protein belongs to the adenylate kinase family. As to quaternary structure, monomer.

Its subcellular location is the cytoplasm. It carries out the reaction AMP + ATP = 2 ADP. It participates in purine metabolism; AMP biosynthesis via salvage pathway; AMP from ADP: step 1/1. Catalyzes the reversible transfer of the terminal phosphate group between ATP and AMP. Plays an important role in cellular energy homeostasis and in adenine nucleotide metabolism. This is Adenylate kinase from Desulfitobacterium hafniense (strain DSM 10664 / DCB-2).